The following is a 143-amino-acid chain: Probable FAD-linked sulfhydryl oxidase R368 (143 aa).

Residues 10-104 enclose the ERV/ALR sulfhydryl oxidase domain; sequence GWTFSHAVAL…YPEAIEAIEK (95 aa). C46 and C49 are oxidised to a cystine. Residues 117–137 form a helical membrane-spanning segment; that stretch reads FFIILIIIGIIVIIYLMYIVF.

The cofactor is FAD.

It is found in the membrane. The enzyme catalyses 2 R'C(R)SH + O2 = R'C(R)S-S(R)CR' + H2O2. In terms of biological role, FAD-dependent sulfhydryl oxidase that catalyzes disulfide bond formation. The sequence is that of Probable FAD-linked sulfhydryl oxidase R368 from Acanthamoeba polyphaga mimivirus (APMV).